The following is a 161-amino-acid chain: MPSFDIVSKVDMQEVDNAINQTVKEIAQRYDFKGSKCEVTLEKESIKVLADDDFKLKAVIDILQSKFVKRNISPKSLQYGKAEQASGSMVRQIITLQVGISKEKAKEIGQVIKETKLKVQSQIQDDQLRVTGKNIDDLQEVIRVLKGKDLDIDMQFVNFRS.

This sequence belongs to the YajQ family.

Its function is as follows. Nucleotide-binding protein. The polypeptide is Nucleotide-binding protein GM21_0633 (Geobacter sp. (strain M21)).